The following is a 267-amino-acid chain: Undecaprenyl-diphosphatase (267 aa).

7 consecutive transmembrane segments (helical) span residues 1–21 (MSLF…FLPI), 40–60 (GQAI…LYFW), 85–105 (LAFL…FLEV), 112–132 (LRSI…LYWA), 189–209 (AMLM…AEVI), 219–239 (DGAI…TLMF), and 245–265 (VSFT…LVIA).

Belongs to the UppP family.

It is found in the cell inner membrane. It catalyses the reaction di-trans,octa-cis-undecaprenyl diphosphate + H2O = di-trans,octa-cis-undecaprenyl phosphate + phosphate + H(+). Catalyzes the dephosphorylation of undecaprenyl diphosphate (UPP). Confers resistance to bacitracin. This is Undecaprenyl-diphosphatase from Jannaschia sp. (strain CCS1).